Reading from the N-terminus, the 430-residue chain is 3-phosphoshikimate 1-carboxyvinyltransferase (430 aa).

Residues K20, S21, and R25 each contribute to the 3-phosphoshikimate site. A phosphoenolpyruvate-binding site is contributed by K20. 2 residues coordinate phosphoenolpyruvate: G92 and R120. Residues S166, Q168, D312, and K339 each contribute to the 3-phosphoshikimate site. Residue Q168 participates in phosphoenolpyruvate binding. The Proton acceptor role is filled by D312. Phosphoenolpyruvate is bound by residues R343 and R387.

Belongs to the EPSP synthase family. As to quaternary structure, monomer.

It localises to the cytoplasm. It catalyses the reaction 3-phosphoshikimate + phosphoenolpyruvate = 5-O-(1-carboxyvinyl)-3-phosphoshikimate + phosphate. It participates in metabolic intermediate biosynthesis; chorismate biosynthesis; chorismate from D-erythrose 4-phosphate and phosphoenolpyruvate: step 6/7. Its function is as follows. Catalyzes the transfer of the enolpyruvyl moiety of phosphoenolpyruvate (PEP) to the 5-hydroxyl of shikimate-3-phosphate (S3P) to produce enolpyruvyl shikimate-3-phosphate and inorganic phosphate. The sequence is that of 3-phosphoshikimate 1-carboxyvinyltransferase from Lactococcus lactis subsp. cremoris (strain MG1363).